An 896-amino-acid chain; its full sequence is Zinc finger protein 574 (896 aa).

3 consecutive C2H2-type zinc fingers follow at residues 16 to 38 (YVCS…QNSH), 76 to 98 (YQCL…QELH), and 126 to 148 (YECV…RQTH). Residue S164 is modified to Phosphoserine. The C2H2-type 4 zinc-finger motif lies at 214–236 (YKCSECSQLFQLPADFLEHQATH). The span at 259-272 (VEVPVSQPEPVPSS) shows a compositional bias: low complexity. Positions 259-303 (VEVPVSQPEPVPSSDHSYELRNGEALGRDRRGRRARRNNSGEPGG) are disordered. Residues 274-287 (HSYELRNGEALGRD) show a composition bias toward basic and acidic residues. S298 carries the phosphoserine modification. 4 C2H2-type zinc fingers span residues 309–331 (LFCS…LRSH), 336–358 (FKCP…LGDH), 364–386 (FLCV…RRAH), and 392–413 (HSCP…RRTH). The tract at residues 434 to 460 (FPEPAPAETGEPEAPEPPVAEESSAEP) is disordered. 6 C2H2-type zinc fingers span residues 466-489 (YRCL…RFVH), 495-517 (HKCS…LRTH), 523-545 (FPCP…RLTH), 551-573 (YRCG…RLVH), 579-601 (YRCQ…RYHH), and 607-630 (YKCR…LVAH). The C2H2-type 15; degenerate zinc finger occupies 636-659 (HRCSSCGAAFPSSLRLREHRCAAA). The C2H2-type 16 zinc-finger motif lies at 667-689 (FECGTCGKKVGSAARLQAHEAAH). The disordered stretch occupies residues 687 to 733 (AAHAAAGPGEVLAKEPPAPRAPRAARTPITSPTTLGSAAPAAPAAPA). Low complexity predominate over residues 707-732 (APRAARTPITSPTTLGSAAPAAPAAP). Position 717 is a phosphoserine (S717). 4 C2H2-type zinc fingers span residues 738 to 760 (LECS…RRIH), 766 to 788 (YPCP…RRLH), 794 to 816 (FACE…RRIH), and 822 to 844 (YSCP…RKTH). An Asymmetric dimethylarginine modification is found at R832.

Belongs to the krueppel C2H2-type zinc-finger protein family.

It is found in the nucleus. Functionally, may be involved in transcriptional regulation. The sequence is that of Zinc finger protein 574 (ZNF574) from Bos taurus (Bovine).